The primary structure comprises 238 residues: Proteasome subunit beta type-6 (238 aa).

Residue Ala-2 is modified to N-acetylalanine. A propeptide spans 2–33 (AAALAVRRAGSAPAFGPEALTPDWENREVSTG) (removed in mature form). Thr-34 functions as the Nucleophile in the catalytic mechanism. Thr-68 is subject to Phosphothreonine.

The protein belongs to the peptidase T1B family. The 26S proteasome consists of a 20S proteasome core and two 19S regulatory subunits. The 20S proteasome core is a barrel-shaped complex made of 28 subunits that are arranged in four stacked rings. The two outer rings are each formed by seven alpha subunits, and the two inner rings are formed by seven beta subunits. The proteolytic activity is exerted by three beta-subunits PSMB5, PSMB6 and PSMB7.

The protein localises to the cytoplasm. The protein resides in the nucleus. The catalysed reaction is Cleavage of peptide bonds with very broad specificity.. Functionally, component of the 20S core proteasome complex involved in the proteolytic degradation of most intracellular proteins. This complex plays numerous essential roles within the cell by associating with different regulatory particles. Associated with two 19S regulatory particles, forms the 26S proteasome and thus participates in the ATP-dependent degradation of ubiquitinated proteins. The 26S proteasome plays a key role in the maintenance of protein homeostasis by removing misfolded or damaged proteins that could impair cellular functions, and by removing proteins whose functions are no longer required. Associated with the PA200 or PA28, the 20S proteasome mediates ubiquitin-independent protein degradation. This type of proteolysis is required in several pathways including spermatogenesis (20S-PA200 complex) or generation of a subset of MHC class I-presented antigenic peptides (20S-PA28 complex). Within the 20S core complex, PSMB6 displays a peptidylglutamyl-hydrolyzing activity also termed postacidic or caspase-like activity, meaning that the peptides bond hydrolysis occurs directly after acidic residues. The protein is Proteasome subunit beta type-6 (Psmb6) of Mus musculus (Mouse).